A 169-amino-acid polypeptide reads, in one-letter code: Peptide deformylase (169 aa).

C91 and H133 together coordinate Fe cation. Residue E134 is part of the active site. Residue H137 participates in Fe cation binding.

The protein belongs to the polypeptide deformylase family. Fe(2+) is required as a cofactor.

The catalysed reaction is N-terminal N-formyl-L-methionyl-[peptide] + H2O = N-terminal L-methionyl-[peptide] + formate. In terms of biological role, removes the formyl group from the N-terminal Met of newly synthesized proteins. Requires at least a dipeptide for an efficient rate of reaction. N-terminal L-methionine is a prerequisite for activity but the enzyme has broad specificity at other positions. The protein is Peptide deformylase of Klebsiella pneumoniae (strain 342).